Here is a 682-residue protein sequence, read N- to C-terminus: Probable methyltransferase PMT12 (682 aa).

At 1–11 (MKLFLNSNLLR) the chain is on the cytoplasmic side. The chain crosses the membrane as a helical; Signal-anchor for type II membrane protein span at residues 12-32 (NSIFFKISAFVLISVACFFLG). Topologically, residues 33-682 (KHWSEDGFRR…KRRKTKGKRA (650 aa)) are lumenal. Asparagine 67, asparagine 103, asparagine 125, asparagine 155, asparagine 173, asparagine 193, asparagine 273, asparagine 350, asparagine 395, asparagine 419, asparagine 600, and asparagine 625 each carry an N-linked (GlcNAc...) asparagine glycan.

Belongs to the methyltransferase superfamily.

It is found in the golgi apparatus membrane. In Arabidopsis thaliana (Mouse-ear cress), this protein is Probable methyltransferase PMT12.